The chain runs to 999 residues: Sarcoplasmic/endoplasmic reticulum calcium ATPase 3 (999 aa).

The Cytoplasmic segment spans residues 1–48; that stretch reads MEAAHSVPVQDVLSRFGVAESCGLSPEQVRRNREKYGPNELPAEERKS. The chain crosses the membrane as a helical span at residues 49 to 69; it reads LWELVLEQFEDLLVRILLMAA. Over 70–89 the chain is Lumenal; sequence FLSFILAWFEEGEESTTAFV. A helical membrane pass occupies residues 90–110; that stretch reads EPIVIIMILIANAVVGVWQER. Over 111–253 the chain is Cytoplasmic; that stretch reads NAESAIEALK…PEKTPLQQKL (143 aa). Residues 254–273 traverse the membrane as a helical segment; sequence DEFSQQLSKVIFLVCIAVWV. At 274–295 the chain is on the lumenal side; sequence INISHFSDPVHGGSWFRGAIYY. Residues 296–313 traverse the membrane as a helical segment; it reads FKTSVALAVAAIPEGLPA. Residues valine 304, alanine 305, isoleucine 307, and glutamate 309 each contribute to the Ca(2+) site. Residues 314–757 lie on the Cytoplasmic side of the membrane; it reads VITTCLALGT…EEGRAIYNNM (444 aa). Aspartate 351 functions as the 4-aspartylphosphate intermediate in the catalytic mechanism. The Mg(2+) site is built by aspartate 351 and threonine 353. Threonine 353 contacts ATP. Residues 370–400 are interaction with phospholamban 1; sequence EKVEGTQCSLHEFSITGSTYAPEGQILKDEK. ATP-binding residues include glutamate 442, arginine 489, lysine 515, arginine 560, threonine 625, glycine 626, aspartate 627, arginine 678, and lysine 684. Position 703 (aspartate 703) interacts with Mg(2+). Asparagine 706 contacts ATP. A helical transmembrane segment spans residues 758 to 777; that stretch reads KQFIRYLISSNVGEVVCIFL. Ca(2+)-binding residues include asparagine 768 and glutamate 771. Residues 778–787 lie on the Lumenal side of the membrane; it reads TAILGLPEAL. Residues 788–808 traverse the membrane as a helical segment; that stretch reads IPVQLLWVNLVTDGLPATALG. An interaction with phospholamban 2 region spans residues 788–808; the sequence is IPVQLLWVNLVTDGLPATALG. Ca(2+) is bound by residues asparagine 796, threonine 799, and aspartate 800. Residues 809 to 828 lie on the Cytoplasmic side of the membrane; it reads FNPPDLDIMDKLPRNPKEPL. The chain crosses the membrane as a helical span at residues 829–851; that stretch reads ISGWLFFRYLAIGVYVGLATVGA. Residues 852 to 897 are Lumenal-facing; sequence ATWWFLYDAEGPQVSFHQLRNFMRCTEDNPIFEGVNCEIFESRYPT. A helical membrane pass occupies residues 898–917; that stretch reads TMALSVLVTIEMCNALNSVS. Residue glutamate 908 participates in Ca(2+) binding. The Cytoplasmic segment spans residues 918–930; that stretch reads ENQSLLRMPPWLN. Residues 931–949 form a helical membrane-spanning segment; sequence IWLLGAIVMSMALHFFILY. Topologically, residues 950 to 964 are lumenal; it reads VKPMPLIFQVTPLSW. Residues 965 to 985 form a helical membrane-spanning segment; the sequence is PQWVVVLKISLPVILLDEGLK. Over 986–999 the chain is Cytoplasmic; it reads YLSRNHLEGEEDKK.

The protein belongs to the cation transport ATPase (P-type) (TC 3.A.3) family. Type IIA subfamily. Interacts with sarcolipin (SLN). Interacts with phospholamban (PLN). Interacts with myoregulin (MRLN). Interacts with DWORF. Requires Mg(2+) as cofactor. As to expression, found in spleen, lung, intestine and brain.

Its subcellular location is the endoplasmic reticulum membrane. The protein localises to the sarcoplasmic reticulum membrane. It carries out the reaction Ca(2+)(in) + ATP + H2O = Ca(2+)(out) + ADP + phosphate + H(+). Inhibited by sarcolipin (SLN), phospholamban (PLN) and myoregulin (MRLN). Enhanced by DWORF; DWORF increases activity by displacing sarcolipin (SLN), phospholamban (PLN) and myoregulin (MRLN). Its function is as follows. This magnesium-dependent enzyme catalyzes the hydrolysis of ATP coupled with the transport of calcium. Transports calcium ions from the cytosol into the sarcoplasmic/endoplasmic reticulum lumen. Contributes to calcium sequestration involved in muscular excitation/contraction. This chain is Sarcoplasmic/endoplasmic reticulum calcium ATPase 3 (ATP2A3), found in Gallus gallus (Chicken).